A 112-amino-acid polypeptide reads, in one-letter code: Larval cuticle protein 4 (112 aa).

A signal peptide spans 1–16; the sequence is MFKILLVCALVALVAA. A Chitin-binding type R&amp;R domain is found at 31 to 92; that stretch reads ADGFVSKLVL…PQSDLLPTPP (62 aa).

Component of the larval cuticle. The polypeptide is Larval cuticle protein 4 (Lcp4) (Drosophila melanogaster (Fruit fly)).